A 223-amino-acid chain; its full sequence is Urease accessory protein UreF (223 aa).

The protein belongs to the UreF family. In terms of assembly, ureD, UreF and UreG form a complex that acts as a GTP-hydrolysis-dependent molecular chaperone, activating the urease apoprotein by helping to assemble the nickel containing metallocenter of UreC. The UreE protein probably delivers the nickel.

It localises to the cytoplasm. Required for maturation of urease via the functional incorporation of the urease nickel metallocenter. The protein is Urease accessory protein UreF of Pseudomonas aeruginosa (strain LESB58).